The following is a 196-amino-acid chain: ATP-dependent Clp protease proteolytic subunit (196 aa).

The active-site Nucleophile is the Ser96. His121 is a catalytic residue.

Belongs to the peptidase S14 family. Fourteen ClpP subunits assemble into 2 heptameric rings which stack back to back to give a disk-like structure with a central cavity, resembling the structure of eukaryotic proteasomes.

The protein resides in the cytoplasm. It catalyses the reaction Hydrolysis of proteins to small peptides in the presence of ATP and magnesium. alpha-casein is the usual test substrate. In the absence of ATP, only oligopeptides shorter than five residues are hydrolyzed (such as succinyl-Leu-Tyr-|-NHMec, and Leu-Tyr-Leu-|-Tyr-Trp, in which cleavage of the -Tyr-|-Leu- and -Tyr-|-Trp bonds also occurs).. In terms of biological role, cleaves peptides in various proteins in a process that requires ATP hydrolysis. Has a chymotrypsin-like activity. Plays a major role in the degradation of misfolded proteins. The protein is ATP-dependent Clp protease proteolytic subunit of Streptococcus pneumoniae (strain P1031).